Reading from the N-terminus, the 327-residue chain is Malate dehydrogenase (327 aa).

Position 11-17 (11-17) interacts with NAD(+); the sequence is GAAGQIG. Substrate-binding residues include Arg92 and Arg98. NAD(+) is bound by residues Asn105, Gln112, and 129–131; that span reads VGN. The substrate site is built by Asn131 and Arg162. Catalysis depends on His187, which acts as the Proton acceptor.

Belongs to the LDH/MDH superfamily. MDH type 2 family.

The catalysed reaction is (S)-malate + NAD(+) = oxaloacetate + NADH + H(+). Its function is as follows. Catalyzes the reversible oxidation of malate to oxaloacetate. The protein is Malate dehydrogenase of Thermus thermophilus (strain ATCC BAA-163 / DSM 7039 / HB27).